We begin with the raw amino-acid sequence, 137 residues long: Large ribosomal subunit protein uL16 (137 aa).

The protein belongs to the universal ribosomal protein uL16 family. Part of the 50S ribosomal subunit.

Its function is as follows. Binds 23S rRNA and is also seen to make contacts with the A and possibly P site tRNAs. The chain is Large ribosomal subunit protein uL16 from Nitratidesulfovibrio vulgaris (strain DSM 19637 / Miyazaki F) (Desulfovibrio vulgaris).